The following is a 682-amino-acid chain: Methionine--tRNA ligase (682 aa).

Positions 15-25 match the 'HIGH' region motif; it reads PYANGAIHLGH. Zn(2+) is bound by residues Cys146, Cys149, Cys159, and Cys162. The short motif at 331 to 335 is the 'KMSKS' region element; it reads KMSKS. Lys334 provides a ligand contact to ATP. Positions 580 to 682 constitute a tRNA-binding domain; that stretch reads DFAKLDMRVA…NGVTAGMQVK (103 aa).

It belongs to the class-I aminoacyl-tRNA synthetase family. MetG type 1 subfamily. As to quaternary structure, homodimer. Requires Zn(2+) as cofactor.

Its subcellular location is the cytoplasm. It catalyses the reaction tRNA(Met) + L-methionine + ATP = L-methionyl-tRNA(Met) + AMP + diphosphate. Functionally, is required not only for elongation of protein synthesis but also for the initiation of all mRNA translation through initiator tRNA(fMet) aminoacylation. This is Methionine--tRNA ligase from Haemophilus influenzae (strain PittGG).